Consider the following 229-residue polypeptide: PKHD-type hydroxylase Rpal_3968 (229 aa).

A Fe2OG dioxygenase domain is found at 78 to 180; sequence QIFPPLFNRY…RVASFFWLQS (103 aa). Positions 98, 100, and 161 each coordinate Fe cation. Arginine 171 is a binding site for 2-oxoglutarate.

Fe(2+) is required as a cofactor. The cofactor is L-ascorbate.

The protein is PKHD-type hydroxylase Rpal_3968 of Rhodopseudomonas palustris (strain TIE-1).